We begin with the raw amino-acid sequence, 330 residues long: MEFSSQDDDFGGDDSAANATRASGNRRSFGDLEDDEDDIFGSTTVAPGVRTGMILSLRGSLKNCKDDLASCQNELESAKTEIQKWKSAFQNESFVPAGKSPEPRFLIDYIQNLKSSEKSLKEQLEIAKRKEASCIVQYAKREQEMAELKSAVRDLKSQLKPASMQARRLLLDPAIHEEFSRLKNLVEEKDKKIKELQDNIAAVTFTPQSKNGKMLMAKCRTLQEENEEIGHQAAEGKIHELAIKLAMQKSQNAELRSQFEGLYKHMEELTNDVERSNETVIILQEKLEEKEKEIERVKKGLEIVSELVGDKKDEVDEIDEDAKEEIAGGE.

Residue M1 is modified to N-acetylmethionine. Residues 1-12 are compositionally biased toward acidic residues; sequence MEFSSQDDDFGG. The segment at 1 to 43 is disordered; the sequence is MEFSSQDDDFGGDDSAANATRASGNRRSFGDLEDDEDDIFGST. Residues 17 to 26 show a composition bias toward polar residues; the sequence is ANATRASGNR. The stretch at 56-308 forms a coiled coil; it reads SLRGSLKNCK…KGLEIVSELV (253 aa).

Belongs to the fl(2)d family. As to quaternary structure, forms homodimers. Interacts with MTA/EMB1706. Interacts with FKBP12; interaction is inhibited by the immunosuppressive drug FK506. Interacts with VIR. Associates with MTA, MTB, VIR and HAKAI to form the m6A writer complex which is essential for adenosine methylation at specific mRNA sequences. As to expression, ubiquitously expressed with higher levels in primary and lateral roots, leaves, trichomes, and in pollen grains (at protein level).

It is found in the nucleus speckle. The protein localises to the nucleus. The protein resides in the nucleoplasm. Functionally, probable regulatory subunit of the N6-methyltransferase complex, a multiprotein complex that mediates N6-methyladenosine (m6A) methylation at the 5'-[AG]GAC-3' consensus sites of some mRNAs. Associates with MTA, MTB, VIR and HAKAI to form the m6A writer complex which is essential for adenosine methylation at specific mRNA sequences. N6-methyladenosine (m6A) plays a role in mRNA stability, processing, translation efficiency and editing. Essential protein required during endosperm development and embryogenesis. Involved in endoreduplication, especially in trichomes. May play a role in splicing events. In Arabidopsis thaliana (Mouse-ear cress), this protein is FKBP12-interacting protein of 37 kDa.